The sequence spans 520 residues: Nucleobase-ascorbate transporter 1 (520 aa).

A run of 12 helical transmembrane segments spans residues 36-56 (YILMLGTSAFIPALLVPAMGG), 64-84 (VIQTLLFVAGIKTLLQALFGT), 86-106 (LPAVVGGSLAYVVPIAYIIND), 129-149 (ALIVASSIQIILGYSQVWGLF), 150-170 (SRFFSPLGMAPVVGLVGLGMF), 174-194 (FPQLGNCIEIGLPMLLLVIGL), 213-233 (FPILICVTIVWIYAVILTASG), 279-299 (FAMMSAVLVSMVESTGAYIAA), 362-382 (GFMIVFSTLGKFGAVFASIPV), 384-404 (IYAALHCILFGLVAAVGLSFL), 415-435 (LMITGLSLFLGISIPQFFAQY), and 453-473 (AFLNTLFMSPATVGLIIAVFM).

The protein belongs to the nucleobase:cation symporter-2 (NCS2) (TC 2.A.40) family. Expressed in cotyledons 4 days after imbibition (DAI). Expressed in the minor and major veins of cotyledons and leaves, in the shoot apex and pedicels. Expressed in the root meristems, root tips and lateral root primordia.

It localises to the membrane. This is Nucleobase-ascorbate transporter 1 (NAT1) from Arabidopsis thaliana (Mouse-ear cress).